The following is a 65-amino-acid chain: UPF0434 protein PSHAa1659 (65 aa).

Belongs to the UPF0434 family.

In Pseudoalteromonas translucida (strain TAC 125), this protein is UPF0434 protein PSHAa1659.